The following is a 224-amino-acid chain: MDKQQLAKMIDHTILKPEADKASIEKLCKEALEYNFASVCINPTNVELAAKLLKGSEVKVCTVIGFPLGANTMEVKAFETKDAIAKGADEVDMVINIGRLKDKDYEYVEKDIKAVVDAADKKALTKVIIETCLLTEEEKVKACELAKKAGADFVKTSTGFSTGGATPEDIKLMRETVGPDMGVKASGGVRSIEDAEAVIKNGATRIGASASIAICEGKVSDSTY.

Catalysis depends on Asp-92, which acts as the Proton donor/acceptor. The Schiff-base intermediate with acetaldehyde role is filled by Lys-155. Catalysis depends on Lys-184, which acts as the Proton donor/acceptor.

Belongs to the DeoC/FbaB aldolase family. DeoC type 1 subfamily.

It localises to the cytoplasm. It catalyses the reaction 2-deoxy-D-ribose 5-phosphate = D-glyceraldehyde 3-phosphate + acetaldehyde. It functions in the pathway carbohydrate degradation; 2-deoxy-D-ribose 1-phosphate degradation; D-glyceraldehyde 3-phosphate and acetaldehyde from 2-deoxy-alpha-D-ribose 1-phosphate: step 2/2. Catalyzes a reversible aldol reaction between acetaldehyde and D-glyceraldehyde 3-phosphate to generate 2-deoxy-D-ribose 5-phosphate. This Clostridium perfringens (strain ATCC 13124 / DSM 756 / JCM 1290 / NCIMB 6125 / NCTC 8237 / Type A) protein is Deoxyribose-phosphate aldolase.